We begin with the raw amino-acid sequence, 732 residues long: Acylamino-acid-releasing enzyme (732 aa).

M1 carries the blocked amino end (Met); alternate modification. M1 carries the N-acetylmethionine; alternate modification. Phosphoserine is present on residues S185 and S187. Catalysis depends on charge relay system residues S587, D675, and H707.

Belongs to the peptidase S9C family. In terms of assembly, homotetramer.

It is found in the cytoplasm. The enzyme catalyses Cleavage of an N-acetyl or N-formyl amino acid from the N-terminus of a polypeptide.. Its activity is regulated as follows. Homotetramerization is required for activity. Tetramerization results in the formation of a gated channel which is involved in substrate selection and substrate access to the catalytic sites. Functionally, this enzyme catalyzes the hydrolysis of the N-terminal peptide bond of an N-acetylated peptide to generate an N-acetylated amino acid and a peptide with a free N-terminus. It preferentially cleaves off Ac-Ala, Ac-Met and Ac-Ser. Also, involved in the degradation of oxidized and glycated proteins. The chain is Acylamino-acid-releasing enzyme (Apeh) from Rattus norvegicus (Rat).